Reading from the N-terminus, the 218-residue chain is ATP phosphoribosyltransferase (218 aa).

Belongs to the ATP phosphoribosyltransferase family. Short subfamily. In terms of assembly, heteromultimer composed of HisG and HisZ subunits.

The protein localises to the cytoplasm. The catalysed reaction is 1-(5-phospho-beta-D-ribosyl)-ATP + diphosphate = 5-phospho-alpha-D-ribose 1-diphosphate + ATP. Its pathway is amino-acid biosynthesis; L-histidine biosynthesis; L-histidine from 5-phospho-alpha-D-ribose 1-diphosphate: step 1/9. Catalyzes the condensation of ATP and 5-phosphoribose 1-diphosphate to form N'-(5'-phosphoribosyl)-ATP (PR-ATP). Has a crucial role in the pathway because the rate of histidine biosynthesis seems to be controlled primarily by regulation of HisG enzymatic activity. The chain is ATP phosphoribosyltransferase from Acaryochloris marina (strain MBIC 11017).